Consider the following 458-residue polypeptide: Histone acetyltransferase Tip60 homolog (458 aa).

The disordered stretch occupies residues 1–24 (MTEPKKEIIEDENHGISKKIPTDP). Residues 30–86 (VTEGCRLLVMMASQEEERWAEVISRCRAANGSIKFYVHYIDCNRRLDEWVQSDRLNL) enclose the Tudor-knot domain. The segment at 94-123 (KGGKKGAHLREENRDSNENEGKKSGRKRKI) is disordered. The segment covering 101-116 (HLREENRDSNENEGKK) has biased composition (basic and acidic residues). Positions 168–446 (TRIRNVECIE…INPAALQWRP (279 aa)) constitute an MYST-type HAT domain. A C2HC MYST-type zinc finger spans residues 201–226 (IYICEFCLKYLKSKTCLKRHMEKCAM). Lysine 268 bears the N6-acetyllysine; by autocatalysis mark. Residues 311–313 (ILV) and 318–324 (QKKGYGS) contribute to the acetyl-CoA site. The Proton donor/acceptor role is filled by glutamate 344. The acetyl-CoA site is built by serine 348 and serine 357.

It belongs to the MYST (SAS/MOZ) family. As to quaternary structure, interacts with transcription-associated protein trr-1. Probably a component of a complex with histone acetyltransferase (HAT) activity, at least composed of mys-1 and trr-1. Autoacetylation at Lys-268 is required for binding histones with high affinity and for proper function.

The protein resides in the nucleus. The catalysed reaction is L-lysyl-[protein] + acetyl-CoA = N(6)-acetyl-L-lysyl-[protein] + CoA + H(+). Its function is as follows. Probable catalytic subunit of the Tip60 chromatin-remodeling complex. Plays a role in acetylation of nucleosomal histone H4 and perhaps also H2A, probably acting as a component of the Tip60 histone acetyltransferase complex. Acts in the determination of vulval and distal tip cell (DTC) precursor cell fates. Involved in the positive regulation of transcription factor daf-16, probably acting by histone acetylation; thereby modulating stress resistance. The polypeptide is Histone acetyltransferase Tip60 homolog (Caenorhabditis elegans).